The following is a 270-amino-acid chain: Probable 6-oxopurine nucleoside phosphorylase (270 aa).

Phosphate contacts are provided by residues Ser-10 and 48-49 (RH). Met-191 serves as a coordination point for substrate. Thr-192 contacts phosphate. 215–217 (NYA) serves as a coordination point for substrate.

It belongs to the PNP/MTAP phosphorylase family. MTAP subfamily. As to quaternary structure, homohexamer. Dimer of a homotrimer.

The catalysed reaction is a purine D-ribonucleoside + phosphate = a purine nucleobase + alpha-D-ribose 1-phosphate. It functions in the pathway purine metabolism; purine nucleoside salvage. Functionally, purine nucleoside phosphorylase which is highly specific for 6-oxopurine nucleosides. Cleaves guanosine or inosine to respective bases and sugar-1-phosphate molecules. Involved in purine salvage. The chain is Probable 6-oxopurine nucleoside phosphorylase from Korarchaeum cryptofilum (strain OPF8).